Consider the following 141-residue polypeptide: Large ribosomal subunit protein uL11 (141 aa).

It belongs to the universal ribosomal protein uL11 family. In terms of assembly, part of the ribosomal stalk of the 50S ribosomal subunit. Interacts with L10 and the large rRNA to form the base of the stalk. L10 forms an elongated spine to which L12 dimers bind in a sequential fashion forming a multimeric L10(L12)X complex. One or more lysine residues are methylated.

Its function is as follows. Forms part of the ribosomal stalk which helps the ribosome interact with GTP-bound translation factors. This Shouchella clausii (strain KSM-K16) (Alkalihalobacillus clausii) protein is Large ribosomal subunit protein uL11.